The following is a 456-amino-acid chain: Cobyrinate a,c-diamide synthase (456 aa).

The GATase cobBQ-type domain maps to 247-439 (PIAIARDRAF…LHLHFGGKPW (193 aa)). The active-site Nucleophile is C330.

Belongs to the CobB/CbiA family. It depends on Mg(2+) as a cofactor.

It catalyses the reaction cob(II)yrinate + 2 L-glutamine + 2 ATP + 2 H2O = cob(II)yrinate a,c diamide + 2 L-glutamate + 2 ADP + 2 phosphate + 2 H(+). Its pathway is cofactor biosynthesis; adenosylcobalamin biosynthesis; cob(II)yrinate a,c-diamide from sirohydrochlorin (anaerobic route): step 10/10. In terms of biological role, catalyzes the ATP-dependent amidation of the two carboxylate groups at positions a and c of cobyrinate, using either L-glutamine or ammonia as the nitrogen source. This is Cobyrinate a,c-diamide synthase from Synechococcus sp. (strain ATCC 27144 / PCC 6301 / SAUG 1402/1) (Anacystis nidulans).